The chain runs to 256 residues: MIPPCENAPHIIYHESQRGTRDRDIAKRLQYPSRQDLNSKWKKSVLQPPQCKMKVNVWEIKPPDFSYKLYTSLRIPERSSKPIKEEKRRKKISFPETMLHLPSIRNHPKEVTAPKFITTFPHLDLQKAKLMFVKSGQYPRGVYVNPKPHDFRQYQPGLPNFETTYEKDPFGLKFKSQHLSTVHGYQLPKDDKQKTSTERFITHKHCECTWDSKLILTKAPWPVRSASYTRHRRQRDAYSAFMDRVEEKFTKICKSR.

Positions 1–23 are disordered; it reads MIPPCENAPHIIYHESQRGTRDR. A compositionally biased stretch (basic and acidic residues) spans 12–23; the sequence is IYHESQRGTRDR.

This is an uncharacterized protein from Homo sapiens (Human).